The following is a 193-amino-acid chain: MEVNLLQYEKKYHNYIVAGVDEAGRGSLVGPVVASAVIIDKADIIPGIKDSKKLSKNKREILYERITSNYVWSTAIIAHTEIDNINILEATKKACAIAVANLSLKPQKILVDGNMKFSDIRFISIINGDNLSLSIAAASIIAKVTRDRLMLELSAEFPQYLWHKNYGYGTREHIEAIKTHGLSSYHRRSFKSC.

The RNase H type-2 domain maps to 15–193; sequence YIVAGVDEAG…SYHRRSFKSC (179 aa). Asp-21, Glu-22, and Asp-112 together coordinate a divalent metal cation.

The protein belongs to the RNase HII family. It depends on Mn(2+) as a cofactor. Mg(2+) serves as cofactor.

The protein localises to the cytoplasm. The catalysed reaction is Endonucleolytic cleavage to 5'-phosphomonoester.. Endonuclease that specifically degrades the RNA of RNA-DNA hybrids. This Rickettsia prowazekii (strain Madrid E) protein is Ribonuclease HII (rnhB).